The following is a 274-amino-acid chain: Formamidopyrimidine-DNA glycosylase (274 aa).

P2 functions as the Schiff-base intermediate with DNA in the catalytic mechanism. Catalysis depends on E3, which acts as the Proton donor. The Proton donor; for beta-elimination activity role is filled by K58. Positions 92 and 111 each coordinate DNA. The segment at H239–R273 adopts an FPG-type; degenerate zinc-finger fold. R263 functions as the Proton donor; for delta-elimination activity in the catalytic mechanism.

It belongs to the FPG family. Monomer. It depends on Zn(2+) as a cofactor.

It carries out the reaction Hydrolysis of DNA containing ring-opened 7-methylguanine residues, releasing 2,6-diamino-4-hydroxy-5-(N-methyl)formamidopyrimidine.. It catalyses the reaction 2'-deoxyribonucleotide-(2'-deoxyribose 5'-phosphate)-2'-deoxyribonucleotide-DNA = a 3'-end 2'-deoxyribonucleotide-(2,3-dehydro-2,3-deoxyribose 5'-phosphate)-DNA + a 5'-end 5'-phospho-2'-deoxyribonucleoside-DNA + H(+). Functionally, involved in base excision repair of DNA damaged by oxidation or by mutagenic agents. Acts as a DNA glycosylase that recognizes and removes damaged bases. Has a preference for oxidized purines, such as 7,8-dihydro-8-oxoguanine (8-oxoG). Has AP (apurinic/apyrimidinic) lyase activity and introduces nicks in the DNA strand. Cleaves the DNA backbone by beta-delta elimination to generate a single-strand break at the site of the removed base with both 3'- and 5'-phosphates. In Lactiplantibacillus plantarum (strain ATCC BAA-793 / NCIMB 8826 / WCFS1) (Lactobacillus plantarum), this protein is Formamidopyrimidine-DNA glycosylase.